Reading from the N-terminus, the 459-residue chain is Chromosomal replication initiator protein DnaA (459 aa).

A domain I, interacts with DnaA modulators region spans residues 1–83 (MKNAREIWRN…NKLEIHFIEE (83 aa)). Residues 83–121 (ESQAHKYAPADGSSNESIAVTETKEQPVLLPSKEEGDLG) form a domain II region. Residues 122 to 338 (QLNDKYIFET…GALTRVVAYA (217 aa)) are domain III, AAA+ region. ATP-binding residues include Gly-166, Gly-168, Lys-169, and Thr-170. The domain IV, binds dsDNA stretch occupies residues 339 to 459 (KLVGRPIDPD…IQTLKKALSN (121 aa)).

It belongs to the DnaA family. In terms of assembly, oligomerizes as a right-handed, spiral filament on DNA at oriC.

It is found in the cytoplasm. Plays an essential role in the initiation and regulation of chromosomal replication. ATP-DnaA binds to the origin of replication (oriC) to initiate formation of the DNA replication initiation complex once per cell cycle. Binds the DnaA box (a 9 base pair repeat at the origin) and separates the double-stranded (ds)DNA. Forms a right-handed helical filament on oriC DNA; dsDNA binds to the exterior of the filament while single-stranded (ss)DNA is stabiized in the filament's interior. The ATP-DnaA-oriC complex binds and stabilizes one strand of the AT-rich DNA unwinding element (DUE), permitting loading of DNA polymerase. After initiation quickly degrades to an ADP-DnaA complex that is not apt for DNA replication. Binds acidic phospholipids. In Exiguobacterium sp. (strain ATCC BAA-1283 / AT1b), this protein is Chromosomal replication initiator protein DnaA.